The chain runs to 439 residues: Prenyltransferase iacE (439 aa).

Substrate-binding positions include 88 to 89 (WI), Glu-97, Arg-112, Lys-198, Tyr-200, Arg-271, Lys-273, and Tyr-275.

The protein belongs to the tryptophan dimethylallyltransferase family.

It catalyses the reaction siccayne + dimethylallyl diphosphate = pestalodiol + diphosphate. Its pathway is secondary metabolite biosynthesis. Its function is as follows. Prenyltransferase; part of the gene cluster that mediates the biosynthesis of iso-A82775C, a enylepoxycyclohexane and biosynthetic precursor of the chloropestolide anticancer natural products. Within the cluster, the prenyltransferase iacE prenylates siccayne to generate pestalodiol E, using dimethylallyl diphosphate (DMAPP) as cosubstrate. The probable oxidoreductase iacF is then involved in the epoxidation of pestalodiol F to pestalodiol F, which is further converted to pestalofone A by the short-chain dehydrogenase/reductase iacG. Iso-A82775C is subsequently generated from pestalofone A by the short-chain dehydrogenase/reductase iacC. Iso-A82775C is further condensed with maldoxin via a Diels-Alder reaction to produce the anticancer natural products chloropestolides A to E. This Pestalotiopsis fici (strain W106-1 / CGMCC3.15140) protein is Prenyltransferase iacE.